A 329-amino-acid polypeptide reads, in one-letter code: Signal recognition particle receptor FtsY (329 aa).

GTP contacts are provided by residues 127 to 134 (GVNGVGKT), 209 to 213 (DTAGR), and 273 to 276 (TKLD).

This sequence belongs to the GTP-binding SRP family. FtsY subfamily. Part of the signal recognition particle protein translocation system, which is composed of SRP and FtsY.

The protein localises to the cell membrane. It is found in the cytoplasm. It catalyses the reaction GTP + H2O = GDP + phosphate + H(+). Functionally, involved in targeting and insertion of nascent membrane proteins into the cytoplasmic membrane. Acts as a receptor for the complex formed by the signal recognition particle (SRP) and the ribosome-nascent chain (RNC). This is Signal recognition particle receptor FtsY from Bacillus subtilis (strain 168).